Reading from the N-terminus, the 188-residue chain is Elongation factor P (188 aa).

It belongs to the elongation factor P family.

The protein localises to the cytoplasm. It functions in the pathway protein biosynthesis; polypeptide chain elongation. In terms of biological role, involved in peptide bond synthesis. Stimulates efficient translation and peptide-bond synthesis on native or reconstituted 70S ribosomes in vitro. Probably functions indirectly by altering the affinity of the ribosome for aminoacyl-tRNA, thus increasing their reactivity as acceptors for peptidyl transferase. This chain is Elongation factor P, found in Wolbachia sp. subsp. Brugia malayi (strain TRS).